A 434-amino-acid polypeptide reads, in one-letter code: MKKNFSYWRIFHHIFALPYCSLEKAYKASKRIQKIKKDYFLYKNILFSSKRSWQSILFYIDTELNNSVFKIYLSLLEYKLSLWLIQLFLIFSLFFKKNSKFDLILPNINEKKKKRKINRKLAWIRATLNDLESWRRYYLFSSFLSLDKKEKNNFSFLQMKSSRLTAIAYESIGLVPRSITRTFSRFKAELTNQSSSLVLKEFRLAKYQALASLQYIGCLFFIPLGVSFFFQKCFLEPWIQNWWNIYQSQIFLTSFQEEKALKKLQEIEELFWLDKVMTYSSNKIQLQDLTKEIHQQTIELVQIYNNDSIKIVLHLLTDLIWFITLSCLFILGKERLVILNSWAQELFYSLSDTMKAFFILLLTDLCIGFHSPHGWEIVISSCLEHFGFVHNKHVISCFVSTFPVILDTVFKYLIFRHLNRISPSIVATYHTMNE.

The next 5 membrane-spanning stretches (helical) occupy residues 75–95 (LLEY…SLFF), 210–230 (LASL…SFFF), 311–331 (IVLH…LFIL), 359–379 (ILLL…EIVI), and 395–415 (ISCF…YLIF).

It belongs to the CemA family.

It is found in the plastid. Its subcellular location is the chloroplast inner membrane. It catalyses the reaction K(+)(in) + H(+)(out) = K(+)(out) + H(+)(in). In terms of biological role, contributes to K(+)/H(+) antiport activity by supporting proton efflux to control proton extrusion and homeostasis in chloroplasts in a light-dependent manner to modulate photosynthesis. Prevents excessive induction of non-photochemical quenching (NPQ) under continuous-light conditions. Indirectly promotes efficient inorganic carbon uptake into chloroplasts. The chain is Potassium/proton antiporter CemA from Marchantia polymorpha (Common liverwort).